Reading from the N-terminus, the 117-residue chain is Minor capsid protein p17 (117 aa).

N-linked (GlcNAc...) asparagine; by host glycosylation occurs at Asn-12. Residues 39–59 traverse the membrane as a helical segment; that stretch reads AILLGILILLVIILIIVAIVY. 2 N-linked (GlcNAc...) asparagine; by host glycosylation sites follow: Asn-61 and Asn-97.

The protein belongs to the asfivirus minor capsid protein p17 family. In terms of assembly, interacts with the minor capsid protein M1249L and with the hexon capsid protein p72 capsomers; these interactions form a rigid zipper structure that stabilizes the capsomers. Interacts with host STING1.

Its subcellular location is the virion membrane. The protein resides in the host endoplasmic reticulum membrane. It is found in the host Golgi apparatus membrane. In terms of biological role, together with the penton and the other minor capsid proteins (M1249L, p49), forms a complicated network immediately below the outer capsid shell, stabilizing the whole capsid. Three copies of p17 encircle each p72 capsomer in the inner capsid shell, anchoring p72 capsomers on the inner membrane. Required for the assembly of the capsid and icosahedral morphogenesis. Additionally, inhibits the host cGAS-STING pathway through its interaction with STING1 and subsequent interference of the recruitment of downstream components TBK1 and IKBKE. This African swine fever virus (strain Badajoz 1971 Vero-adapted) (Ba71V) protein is Minor capsid protein p17.